Here is a 163-residue protein sequence, read N- to C-terminus: Neurotrophin-3 (163 aa).

An N-terminal signal peptide occupies residues 1 to 3 (IQS). Residues 4–119 (TSMDQGILTE…VLNRTSRRKR (116 aa)) constitute a propeptide that is removed on maturation. An N-linked (GlcNAc...) asparagine glycan is attached at Asn112. The segment at 112-132 (NRTSRRKREGKSHRGEYSVCD) is disordered. Over residues 123–132 (SHRGEYSVCD) the composition is skewed to basic and acidic residues.

Belongs to the NGF-beta family.

It localises to the secreted. In terms of biological role, seems to promote the survival of visceral and proprioceptive sensory neurons. The sequence is that of Neurotrophin-3 (NTF3) from Exiliboa placata (Oaxacan dwarf boa).